The chain runs to 265 residues: Undecaprenyl-diphosphatase 1 (265 aa).

The next 7 helical transmembrane spans lie at 4–24, 42–62, 84–104, 108–128, 184–204, 217–237, and 245–265; these read IITAFILGIVEGLAEFLPISS, AKTFEIVIQLGAILAIAILYH, FHVFLGVFPAVVAGLLLHDII, LFQPYTVVIGLVAGAILMIFA, SEFSFLIALPVMVGATGLDLL, MFAVGFITSFIVAMLAVVTFL, and LKPFAYYRILLAILFTVFVLL.

Belongs to the UppP family.

Its subcellular location is the cell membrane. The catalysed reaction is di-trans,octa-cis-undecaprenyl diphosphate + H2O = di-trans,octa-cis-undecaprenyl phosphate + phosphate + H(+). Functionally, catalyzes the dephosphorylation of undecaprenyl diphosphate (UPP). Confers resistance to bacitracin. In Bacillus thuringiensis subsp. konkukian (strain 97-27), this protein is Undecaprenyl-diphosphatase 1.